The chain runs to 277 residues: MVVKIGILKCGNIGMSPVVDLCLDERADRNDIDVRVLGSGAKMNPDQVEEVAKKMVEEVKPDFIVYIGPNPAAPGPKKAREILSAGGIPAVIIGDAPGIKDKDAMAEEGLGYVLIKCDPMIGARRQFLDPVEMAMFNADVIRVLAGTGALRVVQNAIDDMVFAVEEGKEIPLPKIVITEQKAVEAMDFANPYAKAKAMAAFVMAEKVADIDVKGCFMTKEMEKYIPIVASAHETIRYAAKLVDEARELEKATDAVSRKPHAGAGQILNKCKLMEKPE.

This sequence belongs to the MTD family.

The catalysed reaction is 5,10-methylenetetrahydromethanopterin + oxidized coenzyme F420-(gamma-L-Glu)(n) + 2 H(+) = 5,10-methenyl-5,6,7,8-tetrahydromethanopterin + reduced coenzyme F420-(gamma-L-Glu)(n). The protein operates within one-carbon metabolism; methanogenesis from CO(2); 5,10-methylene-5,6,7,8-tetrahydromethanopterin from 5,10-methenyl-5,6,7,8-tetrahydromethanopterin (coenzyme F420 route): step 1/1. Its function is as follows. Catalyzes the reversible reduction of methenyl-H(4)MPT(+) to methylene-H(4)MPT. The chain is F420-dependent methylenetetrahydromethanopterin dehydrogenase from Methanococcus maripaludis (strain C5 / ATCC BAA-1333).